A 166-amino-acid polypeptide reads, in one-letter code: Phosphopantetheine adenylyltransferase (166 aa).

Serine 11 is a binding site for substrate. Residues 11-12 and histidine 19 each bind ATP; that span reads SF. Lysine 43, alanine 76, and arginine 90 together coordinate substrate. ATP contacts are provided by residues 91 to 93, glutamate 101, and 126 to 132; these read GLR and LQPVSSS.

This sequence belongs to the bacterial CoaD family. As to quaternary structure, homohexamer. Requires Mg(2+) as cofactor.

The protein resides in the cytoplasm. It carries out the reaction (R)-4'-phosphopantetheine + ATP + H(+) = 3'-dephospho-CoA + diphosphate. It functions in the pathway cofactor biosynthesis; coenzyme A biosynthesis; CoA from (R)-pantothenate: step 4/5. Functionally, reversibly transfers an adenylyl group from ATP to 4'-phosphopantetheine, yielding dephospho-CoA (dPCoA) and pyrophosphate. This Streptococcus equi subsp. equi (strain 4047) protein is Phosphopantetheine adenylyltransferase.